We begin with the raw amino-acid sequence, 291 residues long: Protease HtpX homolog (291 aa).

A run of 2 helical transmembrane segments spans residues Val4–Val24 and Met38–Leu58. His144 contributes to the Zn(2+) binding site. Residue Glu145 is part of the active site. A Zn(2+)-binding site is contributed by His148. 2 helical membrane-spanning segments follow: residues Leu159–Ile179 and Ile199–Phe219. Residue Glu224 participates in Zn(2+) binding.

The protein belongs to the peptidase M48B family. It depends on Zn(2+) as a cofactor.

Its subcellular location is the cell inner membrane. In Chlorobium phaeobacteroides (strain DSM 266 / SMG 266 / 2430), this protein is Protease HtpX homolog.